Reading from the N-terminus, the 244-residue chain is Ras-like protein family member 11B (244 aa).

Positions 19–242 are small GTPase-like; the sequence is PSSRVIKIAV…VLSAKVRTVT (224 aa). GTP is bound by residues 30–37, 77–81, and 142–145; these read GGSGVGKT, DTPGV, and NKAD. The tract at residues 200–222 is disordered; the sequence is INATSSVTEKKRSPLIPRPKSPN.

Belongs to the small GTPase superfamily. Ras family.

The catalysed reaction is GTP + H2O = GDP + phosphate + H(+). The polypeptide is Ras-like protein family member 11B (Danio rerio (Zebrafish)).